Reading from the N-terminus, the 165-residue chain is Probable calcium-binding protein CML18 (165 aa).

EF-hand domains lie at 16-51, 52-87, 90-125, and 126-161; these read EQLA…LGLK, PSQD…DLVK, YTDD…LGHA, and LTAE…AAFD. Ca(2+) contacts are provided by D29, N31, D33, S35, E40, D65, N67, N69, E76, D103, D105, N107, Y109, E114, D139, D141, D143, C145, and E150.

As to quaternary structure, calcium and pH-dependent interaction with NHX1 (increases when pH decreases, better at pH 5.5 than at pH 7.5). Also interacts with the CPB protein At2g18750.

The protein localises to the vacuole. Its function is as follows. Potential calcium sensor that modulates ion selectivity of NHX1. The sequence is that of Probable calcium-binding protein CML18 (CML18) from Arabidopsis thaliana (Mouse-ear cress).